The sequence spans 125 residues: Glucose-1-phosphate adenylyltransferase small subunit (125 aa).

This sequence belongs to the bacterial/plant glucose-1-phosphate adenylyltransferase family. As to quaternary structure, heterotetramer. Leaves.

It localises to the plastid. It is found in the chloroplast. Its subcellular location is the amyloplast. It carries out the reaction alpha-D-glucose 1-phosphate + ATP + H(+) = ADP-alpha-D-glucose + diphosphate. It participates in glycan biosynthesis; starch biosynthesis. Its activity is regulated as follows. Activated by 3'phosphoglycerate, inhibited by orthophosphate. Allosteric regulation. Its function is as follows. This protein plays a role in synthesis of starch. It catalyzes the synthesis of the activated glycosyl donor, ADP-glucose from Glc-1-P and ATP. This chain is Glucose-1-phosphate adenylyltransferase small subunit (GLG1), found in Zea mays (Maize).